A 699-amino-acid polypeptide reads, in one-letter code: LMBR1 domain-containing protein 2 homolog (699 aa).

Residues Met1–Tyr3 are Extracellular-facing. The helical transmembrane segment at Leu4–Ile26 threads the bilayer. Topologically, residues Pro27–His30 are cytoplasmic. Residues Ile31–Ile51 form a helical membrane-spanning segment. Topologically, residues Pro52–Arg106 are extracellular. Asn76 carries N-linked (GlcNAc...) asparagine glycosylation. A helical transmembrane segment spans residues Ile107–Leu127. Over Lys128–Glu144 the chain is Cytoplasmic. The chain crosses the membrane as a helical span at residues Asn145 to Val165. At Lys166 to Ser181 the chain is on the extracellular side. A helical transmembrane segment spans residues Ala182–Val202. Over Pro203–Lys381 the chain is Cytoplasmic. Residues Thr382–Phe402 traverse the membrane as a helical segment. Over Ser403–Thr426 the chain is Extracellular. Residues Ile427–Leu447 form a helical membrane-spanning segment. Topologically, residues Arg448–Ser467 are cytoplasmic. The helical transmembrane segment at Leu468–Gly488 threads the bilayer. Over Leu489–Asp514 the chain is Extracellular. Residues Val515–Cys535 traverse the membrane as a helical segment. The Cytoplasmic portion of the chain corresponds to Leu536–Val699. A coiled-coil region spans residues Glu564 to Asp592. The disordered stretch occupies residues Phe669–Val699.

The protein belongs to the LIMR family.

The protein localises to the membrane. This chain is LMBR1 domain-containing protein 2 homolog, found in Drosophila pseudoobscura pseudoobscura (Fruit fly).